Consider the following 865-residue polypeptide: Protein translocase subunit SecA (865 aa).

ATP-binding positions include Gln-93, Gly-111–Thr-115, and Asp-501. Residues Cys-841, Cys-843, Cys-852, and Cys-853 each coordinate Zn(2+).

The protein belongs to the SecA family. Monomer and homodimer. Part of the essential Sec protein translocation apparatus which comprises SecA, SecYEG and auxiliary proteins SecDF-YajC and YidC. The cofactor is Zn(2+).

The protein localises to the cell inner membrane. It localises to the cytoplasm. The enzyme catalyses ATP + H2O + cellular proteinSide 1 = ADP + phosphate + cellular proteinSide 2.. In terms of biological role, part of the Sec protein translocase complex. Interacts with the SecYEG preprotein conducting channel. Has a central role in coupling the hydrolysis of ATP to the transfer of proteins into and across the cell membrane, serving as an ATP-driven molecular motor driving the stepwise translocation of polypeptide chains across the membrane. In Helicobacter pylori (strain Shi470), this protein is Protein translocase subunit SecA.